We begin with the raw amino-acid sequence, 315 residues long: Beta-ketoacyl-[acyl-carrier-protein] synthase III 2 (315 aa).

Residues Cys113 and His241 contribute to the active site. The interval 242-246 is ACP-binding; the sequence is QANLR. Asn271 is an active-site residue.

The protein belongs to the thiolase-like superfamily. FabH family. Homodimer.

Its subcellular location is the cytoplasm. The enzyme catalyses malonyl-[ACP] + acetyl-CoA + H(+) = 3-oxobutanoyl-[ACP] + CO2 + CoA. It functions in the pathway lipid metabolism; fatty acid biosynthesis. In terms of biological role, catalyzes the condensation reaction of fatty acid synthesis by the addition to an acyl acceptor of two carbons from malonyl-ACP. Catalyzes the first condensation reaction which initiates fatty acid synthesis and may therefore play a role in governing the total rate of fatty acid production. Possesses both acetoacetyl-ACP synthase and acetyl transacylase activities. Its substrate specificity determines the biosynthesis of branched-chain and/or straight-chain of fatty acids. The sequence is that of Beta-ketoacyl-[acyl-carrier-protein] synthase III 2 from Streptomyces avermitilis (strain ATCC 31267 / DSM 46492 / JCM 5070 / NBRC 14893 / NCIMB 12804 / NRRL 8165 / MA-4680).